A 957-amino-acid chain; its full sequence is Glycine dehydrogenase (decarboxylating) (957 aa).

Lys708 carries the post-translational modification N6-(pyridoxal phosphate)lysine.

This sequence belongs to the GcvP family. As to quaternary structure, the glycine cleavage system is composed of four proteins: P, T, L and H. Pyridoxal 5'-phosphate is required as a cofactor.

It carries out the reaction N(6)-[(R)-lipoyl]-L-lysyl-[glycine-cleavage complex H protein] + glycine + H(+) = N(6)-[(R)-S(8)-aminomethyldihydrolipoyl]-L-lysyl-[glycine-cleavage complex H protein] + CO2. In terms of biological role, the glycine cleavage system catalyzes the degradation of glycine. The P protein binds the alpha-amino group of glycine through its pyridoxal phosphate cofactor; CO(2) is released and the remaining methylamine moiety is then transferred to the lipoamide cofactor of the H protein. The sequence is that of Glycine dehydrogenase (decarboxylating) from Escherichia coli (strain UTI89 / UPEC).